The following is a 319-amino-acid chain: tRNA uridine(34) hydroxylase (319 aa).

The Rhodanese domain maps to 127 to 221 (KQEDTVIIDA…YGKDPEVQGE (95 aa)). C181 acts as the Cysteine persulfide intermediate in catalysis.

The protein belongs to the TrhO family.

The catalysed reaction is uridine(34) in tRNA + AH2 + O2 = 5-hydroxyuridine(34) in tRNA + A + H2O. In terms of biological role, catalyzes oxygen-dependent 5-hydroxyuridine (ho5U) modification at position 34 in tRNAs. In Bacillus cereus (strain G9842), this protein is tRNA uridine(34) hydroxylase.